The following is a 691-amino-acid chain: Elongation factor G (691 aa).

In terms of domain architecture, tr-type G spans 8–282 (ERVRNIGIAA…AVVDYLPAPI (275 aa)). GTP-binding positions include 17 to 24 (AHIDAGKT), 81 to 85 (DTPGH), and 135 to 138 (NKMD).

This sequence belongs to the TRAFAC class translation factor GTPase superfamily. Classic translation factor GTPase family. EF-G/EF-2 subfamily.

The protein resides in the cytoplasm. Functionally, catalyzes the GTP-dependent ribosomal translocation step during translation elongation. During this step, the ribosome changes from the pre-translocational (PRE) to the post-translocational (POST) state as the newly formed A-site-bound peptidyl-tRNA and P-site-bound deacylated tRNA move to the P and E sites, respectively. Catalyzes the coordinated movement of the two tRNA molecules, the mRNA and conformational changes in the ribosome. This Prochlorococcus marinus subsp. pastoris (strain CCMP1986 / NIES-2087 / MED4) protein is Elongation factor G.